Reading from the N-terminus, the 371-residue chain is Cyanide hydratase (371 aa).

A CN hydrolase domain is found at 6-285 (YKAAAVTSEP…DGLLYVDIDL (280 aa)). Glu46 acts as the Proton acceptor in catalysis. The active site involves Lys128. Cys163 functions as the Nucleophile in the catalytic mechanism. Basic and acidic residues predominate over residues 339–353 (GLNRPLDPPKDERHG). Residues 339 to 371 (GLNRPLDPPKDERHGIVGVAGQKSAEQRKAGDL) are disordered.

The protein belongs to the carbon-nitrogen hydrolase superfamily. Nitrilase family. In terms of assembly, oligomer of dimers, forming left-handed helical fibers.

It carries out the reaction formamide = hydrogen cyanide + H2O. Its function is as follows. Catalyzes the hydration of cyanide to formamide. Degradation of cyanide may be important for plant pathogenic fungi in infection of cyanogenic plants. Also acts on 2-cyanopyridine, fumaronitrile and benzonitrile, albeit at a lower rate. In Stereum hirsutum (strain FP-91666) (White-rot fungus), this protein is Cyanide hydratase (nit).